Consider the following 196-residue polypeptide: Imidazoleglycerol-phosphate dehydratase (196 aa).

The protein belongs to the imidazoleglycerol-phosphate dehydratase family.

The protein localises to the cytoplasm. It catalyses the reaction D-erythro-1-(imidazol-4-yl)glycerol 3-phosphate = 3-(imidazol-4-yl)-2-oxopropyl phosphate + H2O. It participates in amino-acid biosynthesis; L-histidine biosynthesis; L-histidine from 5-phospho-alpha-D-ribose 1-diphosphate: step 6/9. The polypeptide is Imidazoleglycerol-phosphate dehydratase (Clostridium botulinum (strain Langeland / NCTC 10281 / Type F)).